The sequence spans 628 residues: Monoterpene synthase like 1, chloroplastic (628 aa).

3 residues coordinate Mg(2+): D379, D383, and D531. The short motif at D379–D383 is the DDXXD motif element.

The protein belongs to the terpene synthase family. Tpsd subfamily. Mg(2+) is required as a cofactor. Mn(2+) serves as cofactor.

It localises to the plastid. Its subcellular location is the chloroplast. Its pathway is terpene metabolism; oleoresin biosynthesis. It participates in secondary metabolite biosynthesis; terpenoid biosynthesis. Monoterpene synthase (TPS) involved in the biosynthesis of monoterpene natural products included in conifer oleoresin secretions and volatile emissions; these compounds contribute to biotic and abiotic stress defense against herbivores and pathogens. In Pinus banksiana (Jack pine), this protein is Monoterpene synthase like 1, chloroplastic.